A 63-amino-acid polypeptide reads, in one-letter code: uncharacterized protein (63 aa).

Residues 1-21 (MYLSLLLILLAWTLWLGNSLA) form the signal peptide.

This is an uncharacterized protein from Haemophilus influenzae (strain ATCC 51907 / DSM 11121 / KW20 / Rd).